A 178-amino-acid chain; its full sequence is Cytidylate kinase (178 aa).

Position 7–15 (7–15 (GLPGTGTTT)) interacts with ATP.

The protein belongs to the cytidylate kinase family. Type 2 subfamily.

It is found in the cytoplasm. It catalyses the reaction CMP + ATP = CDP + ADP. It carries out the reaction dCMP + ATP = dCDP + ADP. The chain is Cytidylate kinase from Methanococcus aeolicus (strain ATCC BAA-1280 / DSM 17508 / OCM 812 / Nankai-3).